The sequence spans 282 residues: MNYRELFTGGLSAATVCACSLLVSGAVVASPMSHEVASEGGVMGGSFYVGAAYSPAFPSVTSFDMRESSKETSYVRGYDKSIATIDVSVPANFSKSGYTFAFSKNLITSFDGAVGYSLGGARVELEASYRRFATLADGQYAKSGAESLAAITRDANITETNYFVVKIDEITNTSVMLNGCYDVLHTDLPVSPYVCAGIGASFVDISKQVTTKLAYRGKVGISYQFTPEISLVAGGFYHGLFDESYKDIPAHNSVKFSGEAKASVKAHIADYGFNLGARFLFS.

The N-terminal stretch at 1–29 (MNYRELFTGGLSAATVCACSLLVSGAVVA) is a signal peptide.

This sequence belongs to the surface antigen msp4 family.

The chain is Major surface antigen 4 (msp4) from Anaplasma marginale.